The following is a 307-amino-acid chain: Dioxygenase cdmD (307 aa).

Fe cation contacts are provided by H146, D148, and H226.

The protein belongs to the PhyH family. In terms of assembly, homodimer. The cofactor is Fe cation.

It catalyses the reaction verruculide A + 2-oxoglutarate + O2 = chrodrimanin T + succinate + CO2. The catalysed reaction is chrodrimanin E + 2-oxoglutarate + O2 = chrodrimanin A + succinate + CO2. The protein operates within secondary metabolite biosynthesis; terpenoid biosynthesis. Functionally, dioxygenase; part of the gene cluster that mediates the biosynthesis of chrodrimanin B, a meroterpenoid that acts as a potent blocker of insect GABA-gated chloride channels. The first step of the pathway is the biosynthesis of 6-hydroxymellein by the polyketide synthase cdmE. The prenyltransferase cdmH acts as a 6-hydroxymellein 5-farnesyltransferase and produces the hydrophobic metabolite verruculide C. The FAD-dependent monooxygenase cdmI further converts verruculide C into verruculide B. The terpene cyclase cdmG then produced the pentacyclic molecule 3-hydroxypentacecilide A, the backbone structure of chrodrimanin B, via folding the farnesyl moiety of the substrate into the chair-boat conformation. The short-chain dehydrogenase/reductase cdmF functions as the 3-OH dehydrogenase that oxidizes the C-3 hydroxyl group of 3-hydroxypentacecilide A and produces chrodrimanin C, the dehydrogenated product of 3-hydroxypentacecilide A. The cytochrome P450 monooxygenase cdmJ then accepts both 3-hydroxypentacecilide A and chrodrimanin C and functions as a C-7-beta-hydroxylase to produce respectively chrodrimanin H and chrodrimanin F. The dioxygenase cdmA accepts chrodrimanin H to afford chrodrimanin E, which is further transformed to chrodrimanin A by the dioxygenase cdmD. CdmA can also accept chrodrimanin C as substrate to convert it into verruculide A, which is further converted into chrodrimanin T by cdmD. The last step of the biosynthesis is proposed to be performed by the acetyltransferase cdmC which acetylates chrodrimanin A to yield chrodrimanin B. The pathway may also lead to the production of additional shunt products, including chrodrimanins T and U. This is Dioxygenase cdmD from Talaromyces verruculosus (Penicillium verruculosum).